The primary structure comprises 672 residues: Methionine--tRNA ligase (672 aa).

A 'HIGH' region motif is present at residues 12-22; it reads AYTNGPLHLGH. Cysteine 144, cysteine 147, cysteine 156, and cysteine 159 together coordinate Zn(2+). The short motif at 330-334 is the 'KMSKS' region element; that stretch reads KMSTS. Residue threonine 333 coordinates ATP. The tRNA-binding domain occupies 573–672; that stretch reads DFAKIELKVA…KDLPVGSTIC (100 aa).

Belongs to the class-I aminoacyl-tRNA synthetase family. MetG type 1 subfamily. In terms of assembly, homodimer. It depends on Zn(2+) as a cofactor.

The protein resides in the cytoplasm. It catalyses the reaction tRNA(Met) + L-methionine + ATP = L-methionyl-tRNA(Met) + AMP + diphosphate. Functionally, is required not only for elongation of protein synthesis but also for the initiation of all mRNA translation through initiator tRNA(fMet) aminoacylation. This Methanococcus aeolicus (strain ATCC BAA-1280 / DSM 17508 / OCM 812 / Nankai-3) protein is Methionine--tRNA ligase.